Reading from the N-terminus, the 232-residue chain is Glycerol-3-phosphate acyltransferase (232 aa).

6 consecutive transmembrane segments (helical) span residues 4-24 (FLAI…IIAG), 56-76 (AVTL…VAFF), 90-110 (IALN…TVFA), 124-144 (MLIG…ILAI), 147-167 (TRYV…IIAI), and 191-211 (SLDY…IYTH).

The protein belongs to the PlsY family. As to quaternary structure, probably interacts with PlsX.

The protein localises to the cell inner membrane. The catalysed reaction is an acyl phosphate + sn-glycerol 3-phosphate = a 1-acyl-sn-glycero-3-phosphate + phosphate. Its pathway is lipid metabolism; phospholipid metabolism. Its function is as follows. Catalyzes the transfer of an acyl group from acyl-phosphate (acyl-PO(4)) to glycerol-3-phosphate (G3P) to form lysophosphatidic acid (LPA). This enzyme utilizes acyl-phosphate as fatty acyl donor, but not acyl-CoA or acyl-ACP. The chain is Glycerol-3-phosphate acyltransferase from Chlorobaculum parvum (strain DSM 263 / NCIMB 8327) (Chlorobium vibrioforme subsp. thiosulfatophilum).